We begin with the raw amino-acid sequence, 215 residues long: Ribosomal RNA small subunit methyltransferase G (215 aa).

Residues G77, F82, 130–131, and R146 each bind S-adenosyl-L-methionine; that span reads IE.

Belongs to the methyltransferase superfamily. RNA methyltransferase RsmG family.

It is found in the cytoplasm. It catalyses the reaction guanosine(527) in 16S rRNA + S-adenosyl-L-methionine = N(7)-methylguanosine(527) in 16S rRNA + S-adenosyl-L-homocysteine. Functionally, specifically methylates the N7 position of guanine in position 527 of 16S rRNA. The sequence is that of Ribosomal RNA small subunit methyltransferase G from Bartonella bacilliformis (strain ATCC 35685 / KC583 / Herrer 020/F12,63).